Here is a 362-residue protein sequence, read N- to C-terminus: Ferrochelatase (362 aa).

The Fe cation site is built by His-228 and Glu-309.

The protein belongs to the ferrochelatase family.

The protein resides in the cytoplasm. The enzyme catalyses heme b + 2 H(+) = protoporphyrin IX + Fe(2+). It functions in the pathway porphyrin-containing compound metabolism; protoheme biosynthesis; protoheme from protoporphyrin-IX: step 1/1. Functionally, catalyzes the ferrous insertion into protoporphyrin IX. This chain is Ferrochelatase, found in Bordetella parapertussis (strain 12822 / ATCC BAA-587 / NCTC 13253).